The chain runs to 375 residues: Succinyl-diaminopimelate desuccinylase (375 aa).

Zn(2+) is bound at residue H66. Residue D68 is part of the active site. D99 contributes to the Zn(2+) binding site. E133 functions as the Proton acceptor in the catalytic mechanism. 3 residues coordinate Zn(2+): E134, E162, and H348.

Belongs to the peptidase M20A family. DapE subfamily. Homodimer. Zn(2+) serves as cofactor. The cofactor is Co(2+).

It carries out the reaction N-succinyl-(2S,6S)-2,6-diaminopimelate + H2O = (2S,6S)-2,6-diaminopimelate + succinate. It participates in amino-acid biosynthesis; L-lysine biosynthesis via DAP pathway; LL-2,6-diaminopimelate from (S)-tetrahydrodipicolinate (succinylase route): step 3/3. Catalyzes the hydrolysis of N-succinyl-L,L-diaminopimelic acid (SDAP), forming succinate and LL-2,6-diaminopimelate (DAP), an intermediate involved in the bacterial biosynthesis of lysine and meso-diaminopimelic acid, an essential component of bacterial cell walls. The polypeptide is Succinyl-diaminopimelate desuccinylase (Alkalilimnicola ehrlichii (strain ATCC BAA-1101 / DSM 17681 / MLHE-1)).